A 173-amino-acid chain; its full sequence is ATP synthase subunit b (173 aa).

A helical transmembrane segment spans residues 19–39 (IVWSLIILVIVAVFFYKFFMP).

It belongs to the ATPase B chain family. As to quaternary structure, F-type ATPases have 2 components, F(1) - the catalytic core - and F(0) - the membrane proton channel. F(1) has five subunits: alpha(3), beta(3), gamma(1), delta(1), epsilon(1). F(0) has three main subunits: a(1), b(2) and c(10-14). The alpha and beta chains form an alternating ring which encloses part of the gamma chain. F(1) is attached to F(0) by a central stalk formed by the gamma and epsilon chains, while a peripheral stalk is formed by the delta and b chains.

The protein resides in the cell membrane. In terms of biological role, f(1)F(0) ATP synthase produces ATP from ADP in the presence of a proton or sodium gradient. F-type ATPases consist of two structural domains, F(1) containing the extramembraneous catalytic core and F(0) containing the membrane proton channel, linked together by a central stalk and a peripheral stalk. During catalysis, ATP synthesis in the catalytic domain of F(1) is coupled via a rotary mechanism of the central stalk subunits to proton translocation. Component of the F(0) channel, it forms part of the peripheral stalk, linking F(1) to F(0). This chain is ATP synthase subunit b, found in Bifidobacterium longum (strain NCC 2705).